We begin with the raw amino-acid sequence, 316 residues long: Bifunctional peptidase and (3S)-lysyl hydroxylase Jmjd7 (316 aa).

The 180-residue stretch at 128 to 307 folds into the JmjC domain; sequence VQKQCSNLPT…LKYSYFQLMD (180 aa). Residues histidine 178, aspartate 180, and histidine 277 each coordinate Fe cation.

In terms of assembly, homodimer; disulfide-linked. Interacts with DRG1 and DRG2. It depends on Fe(2+) as a cofactor.

It is found in the nucleus. The protein resides in the cytoplasm. The catalysed reaction is L-lysyl-[protein] + 2-oxoglutarate + O2 = (3S)-3-hydroxy-L-lysyl-[protein] + succinate + CO2. Bifunctional enzyme that acts both as an endopeptidase and 2-oxoglutarate-dependent monooxygenase. Endopeptidase that cleaves histones N-terminal tails at the carboxyl side of methylated arginine or lysine residues, to generate 'tailless nucleosomes', which may trigger transcription elongation. Preferentially recognizes and cleaves monomethylated and dimethylated arginine residues of histones H2, H3 and H4. After initial cleavage, continues to digest histones tails via its aminopeptidase activity. Additionally, may play a role in protein biosynthesis by modifying the translation machinery. Acts as a Fe(2+) and 2-oxoglutarate-dependent monooxygenase, catalyzing (S)-stereospecific hydroxylation at C-3 of 'Lys-22' of DRG1 and 'Lys-21' of DRG2 translation factors (TRAFAC), promoting their interaction with ribonucleic acids (RNA). The protein is Bifunctional peptidase and (3S)-lysyl hydroxylase Jmjd7 of Mus musculus (Mouse).